The primary structure comprises 143 residues: Large ribosomal subunit protein uL13c (143 aa).

Belongs to the universal ribosomal protein uL13 family. In terms of assembly, part of the 50S ribosomal subunit.

Its subcellular location is the plastid. It is found in the chloroplast. The chain is Large ribosomal subunit protein uL13c from Gracilaria tenuistipitata var. liui (Red alga).